Reading from the N-terminus, the 259-residue chain is Thiazole synthase (259 aa).

The active-site Schiff-base intermediate with DXP is lysine 95. Residues glycine 156, 182 to 183 (AG), and 204 to 205 (NT) each bind 1-deoxy-D-xylulose 5-phosphate.

It belongs to the ThiG family. Homotetramer. Forms heterodimers with either ThiH or ThiS.

It is found in the cytoplasm. The enzyme catalyses [ThiS sulfur-carrier protein]-C-terminal-Gly-aminoethanethioate + 2-iminoacetate + 1-deoxy-D-xylulose 5-phosphate = [ThiS sulfur-carrier protein]-C-terminal Gly-Gly + 2-[(2R,5Z)-2-carboxy-4-methylthiazol-5(2H)-ylidene]ethyl phosphate + 2 H2O + H(+). It functions in the pathway cofactor biosynthesis; thiamine diphosphate biosynthesis. In terms of biological role, catalyzes the rearrangement of 1-deoxy-D-xylulose 5-phosphate (DXP) to produce the thiazole phosphate moiety of thiamine. Sulfur is provided by the thiocarboxylate moiety of the carrier protein ThiS. In vitro, sulfur can be provided by H(2)S. This Serratia proteamaculans (strain 568) protein is Thiazole synthase.